Consider the following 425-residue polypeptide: 5-nitroanthranilic acid aminohydrolase (425 aa).

The active site involves aspartate 88. Glutamate 158 acts as the Proton acceptor in catalysis.

The protein belongs to the peptidase M20A family. Requires Co(2+) as cofactor. The cofactor is Mn(2+). It depends on Zn(2+) as a cofactor. Fe(2+) serves as cofactor. Ni(2+) is required as a cofactor.

It catalyses the reaction 5-nitroanthranilate + H2O + H(+) = 5-nitrosalicylate + NH4(+). Its function is as follows. Catalyzes the deamination of 5-nitroanthranilate (5NAA) to 5-nitrosalicylate (5NSA), the first step in biodegradation of 5-nitroanthranilate. In Bradyrhizobium sp, this protein is 5-nitroanthranilic acid aminohydrolase (naaA).